A 344-amino-acid polypeptide reads, in one-letter code: MILRRVTEALEAYKNGEMLIVMDDEDRENEGDLVLAGIFSTPEKINFMATHARGLICVSLTKDLANKFELPPMVSVNDSNHETAFTVSIDAKEAKTGISAFERHLTIELLCKDTTKPSDFVRPGHIFPLIAKDGGVLARTGHTEASVDLCKLAGLKPVSVICEIMKEDGSMARRGDKFLSDFAIKHNLKTLYVSDLISYRLENESLLKMFCQEEREFLKHQTQCYTFLDHQQKNHYAFKFKGAKTHDLAPLVRFHPIKEDFDFLTTGAFEAFFKALEYLKREGGYLIFMNTHSEQNNIVKDFGIGALVLKNLGVKDFRLLSSCEDRQYKALSGFGLKLVETISL.

Residues 1–202 (MILRRVTEAL…VSDLISYRLE (202 aa)) form a DHBP synthase region. D-ribulose 5-phosphate is bound by residues 27 to 28 (RE), Asp-32, 139 to 143 (RTGHT), and Glu-163. Position 28 (Glu-28) interacts with Mg(2+). Residue His-142 participates in Mg(2+) binding. A GTP cyclohydrolase II-like region spans residues 203–344 (NESLLKMFCQ…GLKLVETISL (142 aa)).

The protein in the N-terminal section; belongs to the DHBP synthase family. It in the C-terminal section; belongs to the GTP cyclohydrolase II family. The cofactor is Mg(2+). Requires Mn(2+) as cofactor.

It catalyses the reaction D-ribulose 5-phosphate = (2S)-2-hydroxy-3-oxobutyl phosphate + formate + H(+). It functions in the pathway cofactor biosynthesis; riboflavin biosynthesis; 2-hydroxy-3-oxobutyl phosphate from D-ribulose 5-phosphate: step 1/1. In terms of biological role, catalyzes the conversion of D-ribulose 5-phosphate to formate and 3,4-dihydroxy-2-butanone 4-phosphate. The sequence is that of 3,4-dihydroxy-2-butanone 4-phosphate synthase (ribB) from Helicobacter pylori (strain J99 / ATCC 700824) (Campylobacter pylori J99).